The following is a 90-amino-acid chain: MKTSDNERIKYEITGQAVLQILRMKINFSLQTLIKQLLVMKSAEEDAFRRDLIDSIIRDFSNSDSGGPNRRTATADNKSMFNGKKINRIH.

Residues 63–80 show a composition bias toward polar residues; the sequence is SDSGGPNRRTATADNKSM. Residues 63–90 form a disordered region; that stretch reads SDSGGPNRRTATADNKSMFNGKKINRIH.

Functionally, probably a connector protein for RcsB/C regulation of biofilm formation, providing additional signal input into the two-component signaling pathway. May serve to stimulate biofilm maturation, probably via the Rcs phosphorelay. Mild overexpression at 16 degrees Celsius increases the production of colanic acid, an exopolysaccharide and matrix component, and reduces adhesive curli fimbriae expression. Both of these effects require RcsB. In Escherichia coli (strain K12), this protein is Probable two-component-system connector protein YmgA (ymgA).